Here is a 333-residue protein sequence, read N- to C-terminus: Phosphate acyltransferase (333 aa).

This sequence belongs to the PlsX family. Homodimer. Probably interacts with PlsY.

It is found in the cytoplasm. It catalyses the reaction a fatty acyl-[ACP] + phosphate = an acyl phosphate + holo-[ACP]. The protein operates within lipid metabolism; phospholipid metabolism. Functionally, catalyzes the reversible formation of acyl-phosphate (acyl-PO(4)) from acyl-[acyl-carrier-protein] (acyl-ACP). This enzyme utilizes acyl-ACP as fatty acyl donor, but not acyl-CoA. In Lactobacillus gasseri (strain ATCC 33323 / DSM 20243 / BCRC 14619 / CIP 102991 / JCM 1131 / KCTC 3163 / NCIMB 11718 / NCTC 13722 / AM63), this protein is Phosphate acyltransferase.